We begin with the raw amino-acid sequence, 359 residues long: Phosphoserine aminotransferase (359 aa).

Position 41 (arginine 41) interacts with L-glutamate. Pyridoxal 5'-phosphate contacts are provided by residues 75-76, tryptophan 101, threonine 151, aspartate 171, and glutamine 194; that span reads AS. N6-(pyridoxal phosphate)lysine is present on lysine 195. Position 236–237 (236–237) interacts with pyridoxal 5'-phosphate; the sequence is NT.

Belongs to the class-V pyridoxal-phosphate-dependent aminotransferase family. SerC subfamily. Homodimer. The cofactor is pyridoxal 5'-phosphate.

Its subcellular location is the cytoplasm. The catalysed reaction is O-phospho-L-serine + 2-oxoglutarate = 3-phosphooxypyruvate + L-glutamate. The enzyme catalyses 4-(phosphooxy)-L-threonine + 2-oxoglutarate = (R)-3-hydroxy-2-oxo-4-phosphooxybutanoate + L-glutamate. It functions in the pathway amino-acid biosynthesis; L-serine biosynthesis; L-serine from 3-phospho-D-glycerate: step 2/3. Its pathway is cofactor biosynthesis; pyridoxine 5'-phosphate biosynthesis; pyridoxine 5'-phosphate from D-erythrose 4-phosphate: step 3/5. Its function is as follows. Catalyzes the reversible conversion of 3-phosphohydroxypyruvate to phosphoserine and of 3-hydroxy-2-oxo-4-phosphonooxybutanoate to phosphohydroxythreonine. This chain is Phosphoserine aminotransferase, found in Thiobacillus denitrificans (strain ATCC 25259 / T1).